Consider the following 199-residue polypeptide: Protein GrpE (199 aa).

Over residues 1–17 the composition is skewed to polar residues; the sequence is MSDSDNNTKSQQNNPTQ. The interval 1 to 36 is disordered; that stretch reads MSDSDNNTKSQQNNPTQTDEKSGEEIQSNQKPQRKF.

It belongs to the GrpE family. In terms of assembly, homodimer.

The protein resides in the cytoplasm. Functionally, participates actively in the response to hyperosmotic and heat shock by preventing the aggregation of stress-denatured proteins, in association with DnaK and GrpE. It is the nucleotide exchange factor for DnaK and may function as a thermosensor. Unfolded proteins bind initially to DnaJ; upon interaction with the DnaJ-bound protein, DnaK hydrolyzes its bound ATP, resulting in the formation of a stable complex. GrpE releases ADP from DnaK; ATP binding to DnaK triggers the release of the substrate protein, thus completing the reaction cycle. Several rounds of ATP-dependent interactions between DnaJ, DnaK and GrpE are required for fully efficient folding. The sequence is that of Protein GrpE from Ehrlichia canis (strain Jake).